A 229-amino-acid polypeptide reads, in one-letter code: Cell division topological specificity factor homolog, chloroplastic (229 aa).

A chloroplast-targeting transit peptide spans 1–30 (MAMSSGTLRISATLVSPYHHHHRNRLSLPS). The interaction with MIND1 stretch occupies residues 35–141 (VDFTGFISNG…KMILFSDRCD (107 aa)). The homodimerization stretch occupies residues 142 to 169 (VSDEAKRKIVNNIIHALSDFVEIESEEK).

This sequence belongs to the MinE family. As to quaternary structure, homodimer. Interacts with MIND1. These interactions are required for proper intraplastidic localization. Binds to ARC3. In terms of tissue distribution, expressed in green tissues, especially at the shoot apex. Also present in leaves, stems, buds, and flowers, especially in sepals, siliques (tip and base), and anthers (mostly in pollen grains).

It localises to the plastid. Its subcellular location is the chloroplast. In terms of biological role, acts as a topological specificity factor during plastid division and specify plastid constriction sites (such as the Z-ring) in a MCD1-dependent manner. Especially involved in epidermal plastids division in a FTSZ1-dependent manner. Required for the proper formation of FtsZ rings at the division site in nongreen plastids (e.g. etioplasts). May contribute to gravitropism in stems and hypocotyls. Stimulates MIND1 ATPase activity. In cooperation with MIND1, prevents FtsZ ring formation anywhere outside of the mid-plastids. The chain is Cell division topological specificity factor homolog, chloroplastic from Arabidopsis thaliana (Mouse-ear cress).